A 375-amino-acid polypeptide reads, in one-letter code: MMSTIYRHLSTARPALTKYATNAAVKSTTASSEASTLGALQYALSLDEPSHSWTKSQLKEIYHTPLLELTHAAQLQHRKWHDPTKVQLCTLMNIKSGGCSEDCKYCAQSSRNDTGLKAEKMVKVDEVIKEAEEAKRNGSTRFCLGAAWRDMKGRKSAMKRIQEMVTKVNDMGLETCVTLGMVDQDQAKQLKDAGLTAYNHNIDTSREHYSKVITTRTYDDRLQTIKNVQESGIKACTGGILGLGESEDDHIGFIYTLSNMSPHPESLPINRLVAIKGTPMAEELADPKSKKLQFDEILRTIATARIVMPKAIIRLAAGRYTMKETEQFVCFMAGCNSIFTGKKMLTTMCNGWDEDKAMLAKWGLQPMEAFKYDRS.

Residues 1 to 16 (MMSTIYRHLSTARPAL) constitute a mitochondrion transit peptide. Positions 81-310 (HDPTKVQLCT…IATARIVMPK (230 aa)) constitute a Radical SAM core domain. The [4Fe-4S] cluster site is built by C99, C103, and C106. Residues C143, C176, C236, and R314 each contribute to the [2Fe-2S] cluster site.

This sequence belongs to the radical SAM superfamily. Biotin synthase family. The cofactor is [4Fe-4S] cluster. It depends on [2Fe-2S] cluster as a cofactor.

The protein resides in the mitochondrion. It carries out the reaction (4R,5S)-dethiobiotin + (sulfur carrier)-SH + 2 reduced [2Fe-2S]-[ferredoxin] + 2 S-adenosyl-L-methionine = (sulfur carrier)-H + biotin + 2 5'-deoxyadenosine + 2 L-methionine + 2 oxidized [2Fe-2S]-[ferredoxin]. The protein operates within cofactor biosynthesis; biotin biosynthesis; biotin from 7,8-diaminononanoate: step 2/2. The sequence is that of Biotin synthase, mitochondrial (BIO2) from Saccharomyces cerevisiae (strain ATCC 204508 / S288c) (Baker's yeast).